A 136-amino-acid polypeptide reads, in one-letter code: uncharacterized protein (136 aa).

A helical transmembrane segment spans residues 7-27 (ANVLAILLVSLFLINGLVFLS).

The protein resides in the membrane. This is an uncharacterized protein from Mycoplasma pneumoniae (strain ATCC 29342 / M129 / Subtype 1) (Mycoplasmoides pneumoniae).